Here is a 716-residue protein sequence, read N- to C-terminus: Fatty acid oxidation complex subunit alpha (716 aa).

Residues 1 to 189 (MIYQSPTIQV…KVGAVDSVVA (189 aa)) form an enoyl-CoA hydratase/isomerase region. Aspartate 296 is a binding site for substrate. The interval 311 to 716 (KEVNNAAVLG…AANNGSYYQA (406 aa)) is 3-hydroxyacyl-CoA dehydrogenase. NAD(+)-binding positions include methionine 324, aspartate 343, 400–402 (VVE), lysine 407, and serine 429. The For 3-hydroxyacyl-CoA dehydrogenase activity role is filled by histidine 450. Asparagine 453 is an NAD(+) binding site. Residues asparagine 500 and tyrosine 660 each contribute to the substrate site.

This sequence in the N-terminal section; belongs to the enoyl-CoA hydratase/isomerase family. The protein in the C-terminal section; belongs to the 3-hydroxyacyl-CoA dehydrogenase family. In terms of assembly, heterotetramer of two alpha chains (FadB) and two beta chains (FadA).

The catalysed reaction is a (3S)-3-hydroxyacyl-CoA + NAD(+) = a 3-oxoacyl-CoA + NADH + H(+). The enzyme catalyses a (3S)-3-hydroxyacyl-CoA = a (2E)-enoyl-CoA + H2O. It carries out the reaction a 4-saturated-(3S)-3-hydroxyacyl-CoA = a (3E)-enoyl-CoA + H2O. It catalyses the reaction (3S)-3-hydroxybutanoyl-CoA = (3R)-3-hydroxybutanoyl-CoA. The catalysed reaction is a (3Z)-enoyl-CoA = a 4-saturated (2E)-enoyl-CoA. The enzyme catalyses a (3E)-enoyl-CoA = a 4-saturated (2E)-enoyl-CoA. Its pathway is lipid metabolism; fatty acid beta-oxidation. Functionally, involved in the aerobic and anaerobic degradation of long-chain fatty acids via beta-oxidation cycle. Catalyzes the formation of 3-oxoacyl-CoA from enoyl-CoA via L-3-hydroxyacyl-CoA. It can also use D-3-hydroxyacyl-CoA and cis-3-enoyl-CoA as substrate. The protein is Fatty acid oxidation complex subunit alpha of Shewanella baltica (strain OS185).